The primary structure comprises 238 residues: Group 3 late-embryogenesis abundant protein, mitochondrial (238 aa).

The segment at serine 41 to glycine 62 is disordered. Positions asparagine 50–glutamine 202 form a coiled coil. LEA 11-mer repeat repeat units follow at residues lysine 64–alanine 74, lysine 89–leucine 99, lysine 140–threonine 150, lysine 151–valine 161, lysine 179–valine 189, and lysine 190–alanine 200. 2 stretches are compositionally biased toward basic and acidic residues: residues alanine 182–alanine 200 and aspartate 213–serine 225. The tract at residues alanine 182 to asparagine 238 is disordered. Residues glutamine 226 to asparagine 238 show a composition bias toward low complexity.

It belongs to the LEA type 4 family.

It localises to the mitochondrion. Mitochondrial heat soluble protein acting as a molecular shield in water-deficient condition. This chain is Group 3 late-embryogenesis abundant protein, mitochondrial, found in Hypsibius exemplaris (Freshwater tardigrade).